The chain runs to 35 residues: Potassium channel toxin (35 aa).

3 cysteine pairs are disulfide-bonded: Cys-6–Cys-25, Cys-11–Cys-30, and Cys-15–Cys-32.

This sequence belongs to the short scorpion toxin superfamily. Potassium channel inhibitor family. Alpha-KTx 21 subfamily. In terms of tissue distribution, expressed by the venom gland.

The protein resides in the secreted. Its function is as follows. Toxin that blocks voltage-gated potassium channels (Kv). This Tityus metuendus (Scorpion) protein is Potassium channel toxin.